A 513-amino-acid polypeptide reads, in one-letter code: E3 ubiquitin-protein ligase RNF25 (513 aa).

The RWD domain occupies 9–117 (SEIEVLQSIY…ERAKEILTDS (109 aa)). Residues cysteine 124, cysteine 127, cysteine 142, histidine 144, histidine 147, cysteine 150, cysteine 187, and cysteine 190 each contribute to the Zn(2+) site. The segment at 124 to 191 (CVICLYDFKE…ELAVVCPVCR (68 aa)) adopts an RING-type; atypical zinc-finger fold. The interval 261-513 (NLSDTPGMTD…EKEFRKEGVL (253 aa)) is disordered. Low complexity predominate over residues 271 to 297 (SSGAESSQSLPSSSPDSTSTTQTSQNQ). Polar residues-rich tracts occupy residues 345-397 (SDKI…QDML) and 406-423 (EVSQ…QTIL). A compositionally biased stretch (basic and acidic residues) spans 426–440 (GHPEREHVGRGDKRG). A compositionally biased stretch (gly residues) spans 482-498 (AGRGHRGGGAYRGGGRG). Over residues 501–513 (QRVEKEFRKEGVL) the composition is skewed to basic and acidic residues.

The protein belongs to the RNF25 family.

The protein localises to the cytoplasm. It catalyses the reaction S-ubiquitinyl-[E2 ubiquitin-conjugating enzyme]-L-cysteine + [acceptor protein]-L-lysine = [E2 ubiquitin-conjugating enzyme]-L-cysteine + N(6)-ubiquitinyl-[acceptor protein]-L-lysine.. Its pathway is protein modification; protein ubiquitination. E3 ubiquitin-protein ligase that plays a key role in the RNF14-RNF25 translation quality control pathway, a pathway that takes place when a ribosome has stalled during translation, and which promotes ubiquitination and degradation of translation factors on stalled ribosomes. May also acts as a positive regulator of the Wnt signaling. This Danio rerio (Zebrafish) protein is E3 ubiquitin-protein ligase RNF25.